Here is a 599-residue protein sequence, read N- to C-terminus: Beta-(1--&gt;2)glucan export ATP-binding/permease protein NdvA (599 aa).

In terms of domain architecture, ABC transmembrane type-1 spans 21 to 301 (TITMCVASVL…ISAFINQTVT (281 aa)). 5 helical membrane passes run 22 to 42 (ITMC…PVLF), 55 to 75 (IFSP…AAVF), 156 to 176 (MRMS…GQLV), 248 to 268 (MAST…VTKG), and 276 to 296 (IAFI…SAFI). One can recognise an ABC transporter domain in the interval 335–569 (IVFDNVTYEF…GGRFSDLLRA (235 aa)). 368-375 (GPTGAGKT) contacts ATP.

The protein belongs to the ABC transporter superfamily. Beta-(1--&gt;2)glucan exporter (TC 3.A.1.108.1) family. As to quaternary structure, homodimer.

It localises to the cell inner membrane. It carries out the reaction [(1-&gt;2)-beta-D-glucosyl](n)(in) + ATP + H2O = [(1-&gt;2)-beta-D-glucosyl](n)(out) + ADP + phosphate + H(+). Involved in beta-(1--&gt;2)glucan export. Transmembrane domains (TMD) form a pore in the inner membrane and the ATP-binding domain (NBD) is responsible for energy generation. This Brucella melitensis biotype 1 (strain ATCC 23456 / CCUG 17765 / NCTC 10094 / 16M) protein is Beta-(1--&gt;2)glucan export ATP-binding/permease protein NdvA.